The primary structure comprises 731 residues: Catalase-peroxidase 2 (731 aa).

The span at 1–10 (MAETPNSDMS) shows a compositional bias: polar residues. The tract at residues 1-26 (MAETPNSDMSGATGGRSKRPKSNQDW) is disordered. Positions 95–218 (WHSAGTYRTA…LGASVMGLIY (124 aa)) form a cross-link, tryptophyl-tyrosyl-methioninium (Trp-Tyr) (with M-244). H96 acts as the Proton acceptor in catalysis. A cross-link (tryptophyl-tyrosyl-methioninium (Tyr-Met) (with W-95)) is located at residues 218 to 244 (YVNPEGPDGNPDPEASAKNIRQTFDRM). H259 provides a ligand contact to heme b.

In terms of assembly, homodimer. Requires heme b as cofactor. In terms of processing, formation of the three residue Trp-Tyr-Met cross-link is important for the catalase, but not the peroxidase activity of the enzyme.

It catalyses the reaction H2O2 + AH2 = A + 2 H2O. It carries out the reaction 2 H2O2 = O2 + 2 H2O. Its function is as follows. Bifunctional enzyme with both catalase and broad-spectrum peroxidase activity. The protein is Catalase-peroxidase 2 of Haloarcula marismortui (strain ATCC 43049 / DSM 3752 / JCM 8966 / VKM B-1809) (Halobacterium marismortui).